A 136-amino-acid chain; its full sequence is DNA-binding protein H-NS (136 aa).

Positions 13–67 (TLRAQARECTLETLEEMLEKLEVVVNERREEDSQAQAEIEERTRKLQQYREMLIA) form a coiled coil. The DNA-binding element occupies 113 to 118 (QGRTPA).

The protein belongs to the histone-like protein H-NS family. Interacts with YmoA in the absence of DNA. Homodimer that oligomerizes on DNA into higher-order complexes that form bridges between disparate regions of DNA compacting it. Interacts with YmoA.

The protein resides in the cytoplasm. The protein localises to the nucleoid. Its function is as follows. A DNA-binding protein implicated in transcriptional repression and chromosome organization and compaction. Binds nucleation sites in AT-rich DNA and bridges them, forming higher-order nucleoprotein complexes and condensing the chromosome. As many horizontally transferred genes are AT-rich, it plays a central role in silencing foreign genes. A subset of genes are repressed by H-NS in association with YmoA. Complements a number of hns deficiencies in E.coli; represses the bgl operon, represses hemolysin expression. In Yersinia enterocolitica, this protein is DNA-binding protein H-NS.